A 159-amino-acid chain; its full sequence is Cyclic pyranopterin monophosphate synthase (159 aa).

Substrate contacts are provided by residues 75-77 (LCH) and 113-114 (ME). Residue Asp128 is part of the active site.

The protein belongs to the MoaC family. Homohexamer; trimer of dimers.

It catalyses the reaction (8S)-3',8-cyclo-7,8-dihydroguanosine 5'-triphosphate = cyclic pyranopterin phosphate + diphosphate. The protein operates within cofactor biosynthesis; molybdopterin biosynthesis. In terms of biological role, catalyzes the conversion of (8S)-3',8-cyclo-7,8-dihydroguanosine 5'-triphosphate to cyclic pyranopterin monophosphate (cPMP). This chain is Cyclic pyranopterin monophosphate synthase, found in Aliivibrio salmonicida (strain LFI1238) (Vibrio salmonicida (strain LFI1238)).